The sequence spans 71 residues: DNA-directed RNA polymerase subunit omega (71 aa).

Belongs to the RNA polymerase subunit omega family. In terms of assembly, the RNAP catalytic core consists of 2 alpha, 1 beta, 1 beta' and 1 omega subunit. When a sigma factor is associated with the core the holoenzyme is formed, which can initiate transcription.

It carries out the reaction RNA(n) + a ribonucleoside 5'-triphosphate = RNA(n+1) + diphosphate. Promotes RNA polymerase assembly. Latches the N- and C-terminal regions of the beta' subunit thereby facilitating its interaction with the beta and alpha subunits. The protein is DNA-directed RNA polymerase subunit omega of Azoarcus sp. (strain BH72).